The sequence spans 126 residues: Large ribosomal subunit protein bL19 (126 aa).

It belongs to the bacterial ribosomal protein bL19 family.

Its function is as follows. This protein is located at the 30S-50S ribosomal subunit interface and may play a role in the structure and function of the aminoacyl-tRNA binding site. The sequence is that of Large ribosomal subunit protein bL19 from Bordetella petrii (strain ATCC BAA-461 / DSM 12804 / CCUG 43448).